Consider the following 257-residue polypeptide: Acyl-[acyl-carrier-protein]--UDP-N-acetylglucosamine O-acyltransferase (257 aa).

The protein belongs to the transferase hexapeptide repeat family. LpxA subfamily. As to quaternary structure, homotrimer.

It is found in the cytoplasm. The catalysed reaction is a (3R)-hydroxyacyl-[ACP] + UDP-N-acetyl-alpha-D-glucosamine = a UDP-3-O-[(3R)-3-hydroxyacyl]-N-acetyl-alpha-D-glucosamine + holo-[ACP]. The protein operates within glycolipid biosynthesis; lipid IV(A) biosynthesis; lipid IV(A) from (3R)-3-hydroxytetradecanoyl-[acyl-carrier-protein] and UDP-N-acetyl-alpha-D-glucosamine: step 1/6. In terms of biological role, involved in the biosynthesis of lipid A, a phosphorylated glycolipid that anchors the lipopolysaccharide to the outer membrane of the cell. This is Acyl-[acyl-carrier-protein]--UDP-N-acetylglucosamine O-acyltransferase from Fusobacterium nucleatum subsp. nucleatum (strain ATCC 25586 / DSM 15643 / BCRC 10681 / CIP 101130 / JCM 8532 / KCTC 2640 / LMG 13131 / VPI 4355).